The primary structure comprises 683 residues: uncharacterized protein (683 aa).

14 helical membrane-spanning segments follow: residues 12 to 32 (LLLY…MMGL), 41 to 61 (LWLG…IGLI), 84 to 104 (MAIA…GILF), 110 to 130 (GLAY…LLAP), 162 to 182 (IAVL…IQGV), 194 to 214 (FAVG…LGGM), 221 to 241 (QVAQ…MIAW), 377 to 397 (LNFV…PHIL), 413 to 433 (VAWA…LAAL), 495 to 515 (IAGL…AAAL), 548 to 568 (VTTA…VTSL), 573 to 593 (ILFL…PVLV), 603 to 623 (AAGA…YIIV), and 645 to 665 (IASG…VSLL).

The protein belongs to the sodium:solute symporter (SSF) (TC 2.A.21) family.

Its subcellular location is the cell membrane. This is an uncharacterized protein from Cupriavidus necator (strain ATCC 17699 / DSM 428 / KCTC 22496 / NCIMB 10442 / H16 / Stanier 337) (Ralstonia eutropha).